We begin with the raw amino-acid sequence, 513 residues long: ATP synthase subunit alpha (513 aa).

169-176 provides a ligand contact to ATP; sequence GDRQTGKT.

This sequence belongs to the ATPase alpha/beta chains family. In terms of assembly, F-type ATPases have 2 components, CF(1) - the catalytic core - and CF(0) - the membrane proton channel. CF(1) has five subunits: alpha(3), beta(3), gamma(1), delta(1), epsilon(1). CF(0) has three main subunits: a(1), b(2) and c(9-12). The alpha and beta chains form an alternating ring which encloses part of the gamma chain. CF(1) is attached to CF(0) by a central stalk formed by the gamma and epsilon chains, while a peripheral stalk is formed by the delta and b chains.

Its subcellular location is the cell inner membrane. The catalysed reaction is ATP + H2O + 4 H(+)(in) = ADP + phosphate + 5 H(+)(out). Functionally, produces ATP from ADP in the presence of a proton gradient across the membrane. The alpha chain is a regulatory subunit. The sequence is that of ATP synthase subunit alpha from Escherichia coli O81 (strain ED1a).